Reading from the N-terminus, the 347-residue chain is Cytosolic sulfotransferase 14 (347 aa).

87–92 (KSGTTW) is a binding site for 3'-phosphoadenylyl sulfate. Residue His-155 is the Proton acceptor of the active site. Residues Arg-177, Ser-185, Tyr-244, and 310–312 (RKG) contribute to the 3'-phosphoadenylyl sulfate site.

This sequence belongs to the sulfotransferase 1 family.

It localises to the cytoplasm. Functionally, sulfotransferase that utilizes 3'-phospho-5'-adenylyl sulfate (PAPS) as sulfonate donor. Not active with 11-hydroxyjasmonate or 12-hydroxyjasmonate. This Arabidopsis thaliana (Mouse-ear cress) protein is Cytosolic sulfotransferase 14 (SOT14).